The chain runs to 172 residues: Peptide deformylase 1 (172 aa).

Fe cation-binding residues include C91 and H133. The active site involves E134. Residue H137 participates in Fe cation binding.

This sequence belongs to the polypeptide deformylase family. It depends on Fe(2+) as a cofactor.

The enzyme catalyses N-terminal N-formyl-L-methionyl-[peptide] + H2O = N-terminal L-methionyl-[peptide] + formate. Removes the formyl group from the N-terminal Met of newly synthesized proteins. Requires at least a dipeptide for an efficient rate of reaction. N-terminal L-methionine is a prerequisite for activity but the enzyme has broad specificity at other positions. This chain is Peptide deformylase 1, found in Vibrio parahaemolyticus serotype O3:K6 (strain RIMD 2210633).